Reading from the N-terminus, the 63-residue chain is MKKQEIKKLSKDEVIKNIDKLKKDLFNFRFQKINSQVTDPSKIGQTKKTIARLKTTLKGKLNA.

The protein belongs to the universal ribosomal protein uL29 family.

In Pelagibacter ubique (strain HTCC1062), this protein is Large ribosomal subunit protein uL29.